Here is a 345-residue protein sequence, read N- to C-terminus: Acetylserotonin O-methyltransferase (345 aa).

S-adenosyl-L-methionine contacts are provided by residues tyrosine 147, tryptophan 164, aspartate 210, 235–237 (GDF), and arginine 252. Histidine 255 (proton donor/acceptor) is an active-site residue. Aspartate 256, asparagine 302, and glutamine 306 together coordinate substrate.

This sequence belongs to the class I-like SAM-binding methyltransferase superfamily. Cation-independent O-methyltransferase family. As to quaternary structure, homodimer. As to expression, expressed in the pineal gland (at protein level). In the retina, very low expression is found at the mRNA level, and not at the protein level.

It catalyses the reaction N-acetylserotonin + S-adenosyl-L-methionine = melatonin + S-adenosyl-L-homocysteine + H(+). Its pathway is aromatic compound metabolism; melatonin biosynthesis; melatonin from serotonin: step 1/2. Functionally, catalyzes the transfer of a methyl group onto N-acetylserotonin, producing melatonin (N-acetyl-5-methoxytryptamine). In terms of biological role, does not show Acetylserotonin O-methyltransferase activity. The chain is Acetylserotonin O-methyltransferase (ASMT) from Homo sapiens (Human).